A 181-amino-acid chain; its full sequence is Transcription termination/antitermination protein NusG (181 aa).

The 29-residue stretch at 130–158 folds into the KOW domain; the sequence is PGETVRVNDGPFSDFNGIVEEVDYEKNRL.

Belongs to the NusG family. Monomer. Interacts with the transcription termination factor Rho and with RNA polymerase.

Functionally, participates in transcription elongation, termination and antitermination. In the absence of Rho, increases the rate of transcription elongation by the RNA polymerase (RNAP), probably by partially suppressing pausing. In the presence of Rho, modulates most Rho-dependent termination events by interacting with the RNAP to render the complex more susceptible to the termination activity of Rho. May be required to overcome a kinetic limitation of Rho to function at certain terminators. Also involved in ribosomal RNA transcriptional antitermination. The protein is Transcription termination/antitermination protein NusG of Buchnera aphidicola subsp. Baizongia pistaciae (strain Bp).